A 45-amino-acid chain; its full sequence is Large ribosomal subunit protein bL34 (45 aa).

Residues 1–45 (MTKRTFGGTSRKRKRVSGFRVRMRSHTGRRVIRTRRKRGRSRLAA) form a disordered region. The span at 10–45 (SRKRKRVSGFRVRMRSHTGRRVIRTRRKRGRSRLAA) shows a compositional bias: basic residues.

It belongs to the bacterial ribosomal protein bL34 family.

This is Large ribosomal subunit protein bL34 from Synechococcus sp. (strain CC9311).